The chain runs to 112 residues: Photosystem II reaction center Psb28 protein (112 aa).

The protein belongs to the Psb28 family. As to quaternary structure, part of the photosystem II complex.

It is found in the cellular thylakoid membrane. The protein is Photosystem II reaction center Psb28 protein of Microcystis aeruginosa (strain NIES-843 / IAM M-2473).